The chain runs to 465 residues: tRNA-2-methylthio-N(6)-dimethylallyladenosine synthase (465 aa).

Positions 5 to 125 (RKLHIKSYGC…LPELLKRAGN (121 aa)) constitute an MTTase N-terminal domain. Residues Cys-14, Cys-50, Cys-88, Cys-166, Cys-170, and Cys-173 each contribute to the [4Fe-4S] cluster site. One can recognise a Radical SAM core domain in the interval 152-384 (RARGISAFVT…QELIDSQQSA (233 aa)). Positions 387-449 (KAAIGSTVDV…RYSFLGELVT (63 aa)) constitute a TRAM domain.

The protein belongs to the methylthiotransferase family. MiaB subfamily. In terms of assembly, monomer. [4Fe-4S] cluster is required as a cofactor.

The protein localises to the cytoplasm. It carries out the reaction N(6)-dimethylallyladenosine(37) in tRNA + (sulfur carrier)-SH + AH2 + 2 S-adenosyl-L-methionine = 2-methylsulfanyl-N(6)-dimethylallyladenosine(37) in tRNA + (sulfur carrier)-H + 5'-deoxyadenosine + L-methionine + A + S-adenosyl-L-homocysteine + 2 H(+). In terms of biological role, catalyzes the methylthiolation of N6-(dimethylallyl)adenosine (i(6)A), leading to the formation of 2-methylthio-N6-(dimethylallyl)adenosine (ms(2)i(6)A) at position 37 in tRNAs that read codons beginning with uridine. This is tRNA-2-methylthio-N(6)-dimethylallyladenosine synthase from Bradyrhizobium diazoefficiens (strain JCM 10833 / BCRC 13528 / IAM 13628 / NBRC 14792 / USDA 110).